The sequence spans 108 residues: Small cysteine and glycine repeat-containing protein 8 (108 aa).

The 12 X 2 AA repeats of CG stretch occupies residues 4-84 (CGCGGCGGGC…RRTCSSCGCG (81 aa)).

This sequence belongs to the KRTAP type 28 family.

In the hair cortex, hair keratin intermediate filaments are embedded in an interfilamentous matrix, consisting of hair keratin-associated proteins (KRTAP), which are essential for the formation of a rigid and resistant hair shaft through their extensive disulfide bond cross-linking with abundant cysteine residues of hair keratins. The matrix proteins include the high-sulfur and high-glycine-tyrosine keratins. This is Small cysteine and glycine repeat-containing protein 8 from Homo sapiens (Human).